The sequence spans 211 residues: Dihydrofolate reductase (211 aa).

The region spanning 7–210 (PIVGIVACLQ…YCFEFTLYNR (204 aa)) is the DHFR domain. Residues Ala-13 and 20-26 (GIGFRGG) contribute to the NADP(+) site. Residue 34 to 39 (EMKYFR) participates in substrate binding. An NADP(+)-binding site is contributed by 58-60 (RKT). Arg-74 contributes to the substrate binding site. Residues 80 to 82 (SRS) and 123 to 130 (GGGEVYSQ) each bind NADP(+).

It belongs to the dihydrofolate reductase family.

It carries out the reaction (6S)-5,6,7,8-tetrahydrofolate + NADP(+) = 7,8-dihydrofolate + NADPH + H(+). Its pathway is cofactor biosynthesis; tetrahydrofolate biosynthesis; 5,6,7,8-tetrahydrofolate from 7,8-dihydrofolate: step 1/1. In terms of biological role, key enzyme in folate metabolism. Catalyzes an essential reaction for de novo glycine and purine synthesis, and for DNA precursor synthesis. The polypeptide is Dihydrofolate reductase (DFR1) (Saccharomyces cerevisiae (strain ATCC 204508 / S288c) (Baker's yeast)).